Consider the following 238-residue polypeptide: MTSILVSRFLLAALVLQYATIDAVNYCNLPCRGDRFHVGCGESAFAQECGESPETRDLLKEHTDEILSKINDVRDHVAKGSWGLPMAARMKVVVWDEELARLATRHTKGCLAETHACRNTERFSFPGQLNFEYTDDKLPQTKELIDAAIKKGHLQKHNISREIIESYRDNGPDGNVEELALALSDRVTAVGCGLTTWQDGAKARALLTCNFSSQTLGVDLSTKSGIVLDEKCIERMNV.

Residues 1-23 (MTSILVSRFLLAALVLQYATIDA) form the signal peptide. The short motif at 32-34 (RGD) is the Cell attachment site element. An SCP domain is found at 67–211 (LSKINDVRDH…KARALLTCNF (145 aa)).

It belongs to the CRISP family. Expressed in salivary glands.

Its subcellular location is the secreted. Inhibits platelet aggregation induced by all agonists tested (ADP, arachidonic acid, the thromboxane A2 analog U46619, thrombin, and snake venom snaclecs (TMVA that activates platelet through GPIB, and stejnulxin that specifically acts through GPVI (GP6))). May act by competing with fibrinogen for binding to glycoprotein IIb/IIIa (ITGA2B/ITGB3). The protein is Tabinhibitin 5 of Tabanus yao (Horsefly).